The primary structure comprises 223 residues: Glycosylphosphatidylinositol anchor biosynthesis protein 11 (223 aa).

Transmembrane regions (helical) follow at residues 25–45, 52–72, 88–108, 120–140, 158–178, and 189–209; these read LAVV…SAGI, VMTQ…VVVL, MIAA…LVLF, FVCA…TYHL, VYAA…PIPY, and ITIL…GIAL.

It belongs to the PIGF family.

The protein resides in the endoplasmic reticulum membrane. Its pathway is glycolipid biosynthesis; glycosylphosphatidylinositol-anchor biosynthesis. In terms of biological role, acts in the GPI biosynthetic pathway between GlcNAc-PI synthesis and GPI transfer to protein. In Yarrowia lipolytica (strain CLIB 122 / E 150) (Yeast), this protein is Glycosylphosphatidylinositol anchor biosynthesis protein 11 (GPI11).